Reading from the N-terminus, the 407-residue chain is POC1 centriolar protein homolog A (407 aa).

WD repeat units lie at residues 17–56 (GHRDAVTSVDFSLNTKQLASGSMDSCLMVWHMKPQTRAYR), 59–98 (GHKDAVTCVNFSPSGHLLASGSRDKTVRIWVPNVKGESTV), 101–140 (AHTATVRSVHFCSDGQSFVTASDDKTVKVWSTHRQKFLFS), 143–182 (QHINWVRCAKFSPDGRLIVSASDDKTVKLWDKTSRECVHS), 185–224 (EHGGFVTYVDFHPSGTCIAAAGMDNTVKVWDVRTHRLLQH), 227–266 (LHSAAVNALSFHPSGNYLVTASSDSTLKILDLMEGRLLYT), and 269–308 (GHQGPATTVAFSRTGEYFASGGSDEQVMVWKSNFDIVDYG). The tract at residues 317-357 (PATRASSSGTLPEVDPLVPPGRGRSQESMQSHSQEPVSVPQ) is disordered. The span at 342-357 (QESMQSHSQEPVSVPQ) shows a compositional bias: polar residues. A coiled-coil region spans residues 369-397 (QLDVLTQTVSILEQRLTLTEDKLKQCLEN).

It belongs to the WD repeat POC1 family. In terms of assembly, interacts with POC1B.

Its subcellular location is the cytoplasm. The protein localises to the cytoskeleton. It localises to the microtubule organizing center. It is found in the centrosome. The protein resides in the centriole. Its subcellular location is the cilium basal body. The protein localises to the spindle pole. Its function is as follows. Plays an important role in centriole assembly and/or stability and ciliogenesis. Involved in early steps of centriole duplication, as well as in the later steps of centriole length control. Acts in concert with POC1B to ensure centriole integrity and proper mitotic spindle formation. This chain is POC1 centriolar protein homolog A (POC1A), found in Bos taurus (Bovine).